Consider the following 97-residue polypeptide: Putative pterin-4-alpha-carbinolamine dehydratase (97 aa).

It belongs to the pterin-4-alpha-carbinolamine dehydratase family.

It catalyses the reaction (4aS,6R)-4a-hydroxy-L-erythro-5,6,7,8-tetrahydrobiopterin = (6R)-L-erythro-6,7-dihydrobiopterin + H2O. This chain is Putative pterin-4-alpha-carbinolamine dehydratase, found in Opitutus terrae (strain DSM 11246 / JCM 15787 / PB90-1).